Reading from the N-terminus, the 245-residue chain is Biosynthetic peptidoglycan transglycosylase (245 aa).

Residues 10 to 30 (FLALLFVVATLAQLWYLGQVL) traverse the membrane as a helical segment. Residues 224-245 (DPGTVPLPPPPEPTAPPEGNTQ) are disordered. The segment covering 226–239 (GTVPLPPPPEPTAP) has biased composition (pro residues).

It belongs to the glycosyltransferase 51 family.

Its subcellular location is the cell inner membrane. The catalysed reaction is [GlcNAc-(1-&gt;4)-Mur2Ac(oyl-L-Ala-gamma-D-Glu-L-Lys-D-Ala-D-Ala)](n)-di-trans,octa-cis-undecaprenyl diphosphate + beta-D-GlcNAc-(1-&gt;4)-Mur2Ac(oyl-L-Ala-gamma-D-Glu-L-Lys-D-Ala-D-Ala)-di-trans,octa-cis-undecaprenyl diphosphate = [GlcNAc-(1-&gt;4)-Mur2Ac(oyl-L-Ala-gamma-D-Glu-L-Lys-D-Ala-D-Ala)](n+1)-di-trans,octa-cis-undecaprenyl diphosphate + di-trans,octa-cis-undecaprenyl diphosphate + H(+). The protein operates within cell wall biogenesis; peptidoglycan biosynthesis. Its function is as follows. Peptidoglycan polymerase that catalyzes glycan chain elongation from lipid-linked precursors. In Alcanivorax borkumensis (strain ATCC 700651 / DSM 11573 / NCIMB 13689 / SK2), this protein is Biosynthetic peptidoglycan transglycosylase.